The primary structure comprises 374 residues: tRNA-specific 2-thiouridylase MnmA (374 aa).

ATP contacts are provided by residues 12 to 19 and Met38; that span reads GMSGGVDS. Residues 98–100 are interaction with target base in tRNA; sequence NPD. Cys103 (nucleophile) is an active-site residue. Residues Cys103 and Cys200 are joined by a disulfide bond. An ATP-binding site is contributed by Gly127. Positions 150-152 are interaction with tRNA; sequence KDQ. The active-site Cysteine persulfide intermediate is Cys200. Positions 311-312 are interaction with tRNA; it reads RY.

This sequence belongs to the MnmA/TRMU family.

Its subcellular location is the cytoplasm. The catalysed reaction is S-sulfanyl-L-cysteinyl-[protein] + uridine(34) in tRNA + AH2 + ATP = 2-thiouridine(34) in tRNA + L-cysteinyl-[protein] + A + AMP + diphosphate + H(+). In terms of biological role, catalyzes the 2-thiolation of uridine at the wobble position (U34) of tRNA, leading to the formation of s(2)U34. In Lactiplantibacillus plantarum (strain ATCC BAA-793 / NCIMB 8826 / WCFS1) (Lactobacillus plantarum), this protein is tRNA-specific 2-thiouridylase MnmA.